The sequence spans 447 residues: Multidrug efflux pump SdrM (447 aa).

The next 14 helical transmembrane spans lie at 6 to 26 (IITV…SSII), 42 to 62 (LISL…PIVG), 70 to 90 (IIYV…MCGL), 94 to 114 (FTML…LMSL), 134 to 154 (IVGS…GGIL), 161 to 181 (WLFY…IWTF), 194 to 214 (FDTK…FALL), 217 to 237 (QLLL…MCLF), 260 to 280 (VFIT…YIPV), 286 to 306 (LGLS…AWIT), 323 to 342 (IYLL…SFGI), 346 to 363 (VLIA…GYIY), 392 to 412 (LGAS…SGIF), and 418 to 438 (NVLS…VVFF).

It belongs to the major facilitator superfamily.

It is found in the cell membrane. Functionally, energy-dependent drug efflux pump that increases resistance to antimicrobial agents such as norfloxacin, acriflavine and ethidium bromide. This chain is Multidrug efflux pump SdrM, found in Staphylococcus aureus (strain N315).